A 145-amino-acid chain; its full sequence is RNAP inhibitory protein (145 aa).

The interval 110 to 123 (HIKKLNLNSLAMLS) is C-terminal tail, binds in the RNAP DNA-binding channel.

This sequence belongs to the viral ORF131/RIP family. In terms of assembly, interacts with host RNA polymerase (RNAP) subunits Rpo1N and Rpo2.

The protein resides in the virion. Plays a role in the inhibition of global transcription by interacting with the RNA polymerase (RNAP) clamp, locking it in a fixed position and inhibiting the formation and/or stability of the pre-initiation complex (PIC). Also overlaps with the transcription factor B binding site; overall RIP probably interferes with DNA loading onto RNAP but does not displace DNA once it is loaded. May play a role in virus particle assembly, possibly by dissociating active RNAP from the virus genome. This Acidianus two-tailed virus (ATV) protein is RNAP inhibitory protein.